The chain runs to 697 residues: Elongation factor G 2 (697 aa).

The tr-type G domain maps to 5–280 (SKYRNIGIFA…AVVDYLPAPD (276 aa)). Residues 14 to 21 (AHVDAGKT), 78 to 82 (DTPGH), and 132 to 135 (NKLD) contribute to the GTP site.

It belongs to the TRAFAC class translation factor GTPase superfamily. Classic translation factor GTPase family. EF-G/EF-2 subfamily.

It localises to the cytoplasm. Its function is as follows. Catalyzes the GTP-dependent ribosomal translocation step during translation elongation. During this step, the ribosome changes from the pre-translocational (PRE) to the post-translocational (POST) state as the newly formed A-site-bound peptidyl-tRNA and P-site-bound deacylated tRNA move to the P and E sites, respectively. Catalyzes the coordinated movement of the two tRNA molecules, the mRNA and conformational changes in the ribosome. In Shewanella oneidensis (strain ATCC 700550 / JCM 31522 / CIP 106686 / LMG 19005 / NCIMB 14063 / MR-1), this protein is Elongation factor G 2 (fusB).